A 147-amino-acid polypeptide reads, in one-letter code: Hemoglobin subunit beta-Y (147 aa).

In terms of domain architecture, Globin spans 3-147; that stretch reads HFTAEEKAAI…VANALSLKYH (145 aa). The heme b site is built by His-64 and His-93.

The protein belongs to the globin family. In terms of assembly, heterotetramer of two alpha chains and two beta chains.

Its function is as follows. This is a minor early embryonic beta chain. This Mesocricetus auratus (Golden hamster) protein is Hemoglobin subunit beta-Y (HBBY).